We begin with the raw amino-acid sequence, 384 residues long: Isoafricanol synthase (384 aa).

Residues Asp-95, Asn-245, Ser-249, and Glu-253 each contribute to the Mg(2+) site.

It belongs to the terpene synthase family. It depends on Mg(2+) as a cofactor.

The catalysed reaction is (2E,6E)-farnesyl diphosphate + H2O = (+)-isoafricanol + diphosphate. Its function is as follows. Catalyzes the cyclization of farnesyl diphosphate (FPP) to isoafricanol. The protein is Isoafricanol synthase of Streptomyces violaceusniger (strain Tu 4113).